The primary structure comprises 129 residues: Protein Turandot B2 (129 aa).

A signal peptide spans Met1–Gly21.

Belongs to the Turandot family.

The protein resides in the secreted. Its function is as follows. A humoral factor that may play a role in stress tolerance. The protein is Protein Turandot B2 (TotB2) of Drosophila erecta (Fruit fly).